The primary structure comprises 692 residues: Elongation factor G (692 aa).

In terms of domain architecture, tr-type G spans Glu8–Val282. GTP-binding positions include Ala17 to Thr24, Asp81 to His85, and Asn135 to Asp138.

This sequence belongs to the TRAFAC class translation factor GTPase superfamily. Classic translation factor GTPase family. EF-G/EF-2 subfamily.

It is found in the cytoplasm. In terms of biological role, catalyzes the GTP-dependent ribosomal translocation step during translation elongation. During this step, the ribosome changes from the pre-translocational (PRE) to the post-translocational (POST) state as the newly formed A-site-bound peptidyl-tRNA and P-site-bound deacylated tRNA move to the P and E sites, respectively. Catalyzes the coordinated movement of the two tRNA molecules, the mRNA and conformational changes in the ribosome. This Anoxybacillus flavithermus (strain DSM 21510 / WK1) protein is Elongation factor G.